The primary structure comprises 103 residues: Small ribosomal subunit protein uS10 (103 aa).

This sequence belongs to the universal ribosomal protein uS10 family. In terms of assembly, part of the 30S ribosomal subunit.

Functionally, involved in the binding of tRNA to the ribosomes. The polypeptide is Small ribosomal subunit protein uS10 (Acinetobacter baumannii (strain AB307-0294)).